The following is a 473-amino-acid chain: BPI fold-containing family B member 3 (473 aa).

A signal peptide spans 1–20; it reads MMLGVYTLLLLWGLATPCLG. A glycan (N-linked (GlcNAc...) asparagine) is linked at N139. C161 and C196 are joined by a disulfide.

The protein belongs to the BPI/LBP/Plunc superfamily. BPI/LBP family.

Its subcellular location is the secreted. In terms of biological role, may have the capacity to recognize and bind specific classes of odorants. May act as a carrier molecule, transporting odorants across the mucus layer to access receptor sites. May serve as a primary defense mechanism by recognizing and removing potentially harmful odorants or pathogenic microorganisms from the mucosa or clearing excess odorant from mucus to enable new odorant stimuli to be received. The protein is BPI fold-containing family B member 3 of Mus musculus (Mouse).